Consider the following 505-residue polypeptide: Cytochrome P450 52C1 (505 aa).

A helical membrane pass occupies residues 4–21; it reads LFCFLAGIIVVYKAAQYY. Cys-453 provides a ligand contact to heme.

It belongs to the cytochrome P450 family. It depends on heme as a cofactor.

Its subcellular location is the membrane. Functionally, together with an NADPH cytochrome P450 the enzyme system catalyzes the terminal hydroxylation as the first step in the assimilation of alkanes and fatty acids. The polypeptide is Cytochrome P450 52C1 (CYP52C1) (Candida tropicalis (Yeast)).